A 292-amino-acid chain; its full sequence is 4-hydroxy-tetrahydrodipicolinate synthase (292 aa).

T45 serves as a coordination point for pyruvate. The Proton donor/acceptor role is filled by Y133. The active-site Schiff-base intermediate with substrate is K161. I203 provides a ligand contact to pyruvate.

Belongs to the DapA family. As to quaternary structure, homotetramer; dimer of dimers.

It is found in the cytoplasm. The enzyme catalyses L-aspartate 4-semialdehyde + pyruvate = (2S,4S)-4-hydroxy-2,3,4,5-tetrahydrodipicolinate + H2O + H(+). Its pathway is amino-acid biosynthesis; L-lysine biosynthesis via DAP pathway; (S)-tetrahydrodipicolinate from L-aspartate: step 3/4. Functionally, catalyzes the condensation of (S)-aspartate-beta-semialdehyde [(S)-ASA] and pyruvate to 4-hydroxy-tetrahydrodipicolinate (HTPA). This chain is 4-hydroxy-tetrahydrodipicolinate synthase, found in Salmonella paratyphi A (strain AKU_12601).